A 302-amino-acid chain; its full sequence is tRNA dimethylallyltransferase 1 (302 aa).

6–13 (GPTACGKT) provides a ligand contact to ATP. 8-13 (TACGKT) provides a ligand contact to substrate. 2 interaction with substrate tRNA regions span residues 31 to 34 (DSRQ) and 154 to 158 (QRAIR).

This sequence belongs to the IPP transferase family. In terms of assembly, monomer. Requires Mg(2+) as cofactor.

It catalyses the reaction adenosine(37) in tRNA + dimethylallyl diphosphate = N(6)-dimethylallyladenosine(37) in tRNA + diphosphate. Catalyzes the transfer of a dimethylallyl group onto the adenine at position 37 in tRNAs that read codons beginning with uridine, leading to the formation of N6-(dimethylallyl)adenosine (i(6)A). This is tRNA dimethylallyltransferase 1 from Porphyromonas gingivalis (strain ATCC 33277 / DSM 20709 / CIP 103683 / JCM 12257 / NCTC 11834 / 2561).